A 79-amino-acid polypeptide reads, in one-letter code: Small ribosomal subunit protein bS18 (79 aa).

It belongs to the bacterial ribosomal protein bS18 family. As to quaternary structure, part of the 30S ribosomal subunit. Forms a tight heterodimer with protein bS6.

Functionally, binds as a heterodimer with protein bS6 to the central domain of the 16S rRNA, where it helps stabilize the platform of the 30S subunit. The chain is Small ribosomal subunit protein bS18 from Rhodopseudomonas palustris (strain BisB18).